We begin with the raw amino-acid sequence, 821 residues long: MSEQNTPQVREINISQEMRTSFLDYAMSVIVSRALPDVRDGLKPVHRRILYAMNDLGMTSDKPYKKSARIVGEVIGKYHPHGDSAVYESMVRMAQDFNYRYMLVDGHGNFGSVDGDSAAAMRYTEARMSKISMEILRDITKDTIDYQDNYDGSEREPVVMPSRFPNLLVNGAAGIAVGMATNIPPHQLGEIIDGVLAVSENPDITIPELMEVIPGPDFPTAGQILGRSGIRKAYESGRGSITIRAKAEIEQTSSGKERIIVTELPYQVNKAKLIEKIADLVRDKKIEGITDLRDESDRTGMRIVIEIRRDANANVILNNLYKQTALQTSFGINLLALVDGQPKVLTLKQCLEHYLDHQKVVIRRRTAYELRKAEARAHILEGLRVALDHLDAVISLIRNSQTAEIARTGLIEQFSLTEKQAQAILDMRLQRLTGLEREKIEEEYQSLVKLIAELKDILANEYKVLEIIREELTEIKERFNDERRTEIVTSGLETIEDEDLIERENIVVTLTHNGYVKRLPASTYRSQKRGGKGVQGMGTNEDDFVEHLISTSTHDTILFFSNKGKVYRAKGYEIPEYGRTAKGIPIINLLEVEKGEWINAIIPVTEFNAELYLFFTTKHGVSKRTSLSQFANIRNNGLIALSLREDDELMGVRLTDGTKQIIIGTKNGLLIRFPETDVREMGRTAAGVKGITLTDDDVVVGMEILEEESHVLIVTEKGYGKRTPAEEYRTQSRGGKGLKTAKITENNGQLVAVKATKGEEDLMIITASGVLIRMDINDISITGRVTQGVRLIRMAEEEHVATVALVEKNEEDENEEEQEEV.

Positions 35-500 (LPDVRDGLKP…GLETIEDEDL (466 aa)) constitute a Topo IIA-type catalytic domain. Y123 serves as the catalytic O-(5'-phospho-DNA)-tyrosine intermediate. Residues 527–533 (QKRGGKG) carry the GyrA-box motif.

This sequence belongs to the type II topoisomerase GyrA/ParC subunit family. As to quaternary structure, heterotetramer, composed of two GyrA and two GyrB chains. In the heterotetramer, GyrA contains the active site tyrosine that forms a transient covalent intermediate with DNA, while GyrB binds cofactors and catalyzes ATP hydrolysis.

The protein localises to the cytoplasm. The catalysed reaction is ATP-dependent breakage, passage and rejoining of double-stranded DNA.. Its function is as follows. A type II topoisomerase that negatively supercoils closed circular double-stranded (ds) DNA in an ATP-dependent manner to modulate DNA topology and maintain chromosomes in an underwound state. Negative supercoiling favors strand separation, and DNA replication, transcription, recombination and repair, all of which involve strand separation. Also able to catalyze the interconversion of other topological isomers of dsDNA rings, including catenanes and knotted rings. Type II topoisomerases break and join 2 DNA strands simultaneously in an ATP-dependent manner. This chain is DNA gyrase subunit A, found in Bacillus subtilis (strain 168).